The chain runs to 172 residues: NAD(P)H-quinone oxidoreductase subunit I, chloroplastic (172 aa).

2 consecutive 4Fe-4S ferredoxin-type domains span residues 55–84 (GRIH…VDWK) and 95–124 (LNYS…MTEE). [4Fe-4S] cluster is bound by residues Cys64, Cys67, Cys70, Cys74, Cys104, Cys107, Cys110, and Cys114.

Belongs to the complex I 23 kDa subunit family. As to quaternary structure, NDH is composed of at least 16 different subunits, 5 of which are encoded in the nucleus. Requires [4Fe-4S] cluster as cofactor.

The protein localises to the plastid. Its subcellular location is the chloroplast thylakoid membrane. It carries out the reaction a plastoquinone + NADH + (n+1) H(+)(in) = a plastoquinol + NAD(+) + n H(+)(out). The catalysed reaction is a plastoquinone + NADPH + (n+1) H(+)(in) = a plastoquinol + NADP(+) + n H(+)(out). In terms of biological role, NDH shuttles electrons from NAD(P)H:plastoquinone, via FMN and iron-sulfur (Fe-S) centers, to quinones in the photosynthetic chain and possibly in a chloroplast respiratory chain. The immediate electron acceptor for the enzyme in this species is believed to be plastoquinone. Couples the redox reaction to proton translocation, and thus conserves the redox energy in a proton gradient. The polypeptide is NAD(P)H-quinone oxidoreductase subunit I, chloroplastic (Crucihimalaya wallichii (Rock-cress)).